Here is a 500-residue protein sequence, read N- to C-terminus: Probable cytosol aminopeptidase (500 aa).

2 residues coordinate Mn(2+): Lys268 and Asp273. Lys280 is an active-site residue. Positions 291, 350, and 352 each coordinate Mn(2+). The active site involves Arg354.

Belongs to the peptidase M17 family. The cofactor is Mn(2+).

Its subcellular location is the cytoplasm. The enzyme catalyses Release of an N-terminal amino acid, Xaa-|-Yaa-, in which Xaa is preferably Leu, but may be other amino acids including Pro although not Arg or Lys, and Yaa may be Pro. Amino acid amides and methyl esters are also readily hydrolyzed, but rates on arylamides are exceedingly low.. The catalysed reaction is Release of an N-terminal amino acid, preferentially leucine, but not glutamic or aspartic acids.. In terms of biological role, presumably involved in the processing and regular turnover of intracellular proteins. Catalyzes the removal of unsubstituted N-terminal amino acids from various peptides. The protein is Probable cytosol aminopeptidase of Aromatoleum aromaticum (strain DSM 19018 / LMG 30748 / EbN1) (Azoarcus sp. (strain EbN1)).